The sequence spans 145 residues: Large ribosomal subunit protein bL17 (145 aa).

This sequence belongs to the bacterial ribosomal protein bL17 family. Part of the 50S ribosomal subunit. Contacts protein L32.

In Francisella tularensis subsp. holarctica (strain FTNF002-00 / FTA), this protein is Large ribosomal subunit protein bL17.